The sequence spans 77 residues: Putative neurotoxin 1 (77 aa).

The signal sequence occupies residues 1 to 25 (MKAFIVILSIAIVLLLIVSIKETSA). The propeptide occupies 26-46 (KDCKQECVKRYTKGDLTNFLK).

It belongs to the scolopendra neurotoxin 3 family. Contains 2 disulfide bonds. As to expression, expressed by the venom gland.

The protein localises to the secreted. This chain is Putative neurotoxin 1, found in Scolopendra subspinipes (Vietnamese centipede).